Reading from the N-terminus, the 513-residue chain is Homeobox and leucine zipper protein Homez (513 aa).

The segment at residues 31 to 90 (WTQAVQTSELDGNEHLLQAFSYFPYPSLADIALLCLRHGLQMEKVKTWFMAQRLRCGISW) is a DNA-binding region (homeobox 1). Residues lysine 156, lysine 174, and lysine 176 each participate in a glycyl lysine isopeptide (Lys-Gly) (interchain with G-Cter in SUMO2) cross-link. Disordered stretches follow at residues 200-221 (LSKEQAGGGPDQSCGGGTASWN), 241-287 (SCKE…SFSP), 303-328 (RLRNNSVPSRVGPTEYLSPDMQHQRK), 402-429 (PAISTSSTRSLKEWAKTPPLPAPPPPPD), and 480-513 (LDEEEEEEDEELPEDGEEEEEEEEEEDDDVIIRD). The segment covering 205 to 217 (AGGGPDQSCGGGT) has biased composition (gly residues). Positions 248 to 260 (PSGTPPSSSASSP) are enriched in low complexity. Phosphoserine is present on serine 320. DNA-binding regions (homeobox) lie at residues 324-384 (QHQR…KHGQ) and 418-477 (TPPL…AEVV). The Nuclear localization signal signature appears at 327–332 (RKTKRK). Residue threonine 418 is modified to Phosphothreonine. Positions 419–429 (PPLPAPPPPPD) are enriched in pro residues.

In terms of assembly, homodimer or heterodimer (Potential). Interacts with HOXC8.

The protein localises to the nucleus. Functionally, may function as a transcriptional regulator. The sequence is that of Homeobox and leucine zipper protein Homez (Homez) from Rattus norvegicus (Rat).